The following is a 453-amino-acid chain: MEEKQERRRRIVLIPAPAQGHISPMMQLARALHLKGFSITVAQTKFNYLKPSKDLADFQFITIPESLPASDLKNLGPVWFLLKLNKECEFSFKECLGQLLLQKQLIPEEEIACVIYDEFMYFAEAAAKEFNLPKVIFSTENATAFACRSAMCKLYAKDGLAPLKEGCGREEELVPKLHPLRYKDLPTSAFAPVEASVEVFKSSCDKGTASAMIINTVRCLEISSLEWLQQELKIPIYPIGPLHMVSSAPPTSLLDENESCIDWLNKQKPSSVIYISLGSFTLLETKEVLEMASGLVSSNQHFLWVIRPGSILGSELTNEELLSMMEIPDRGYIVKWAPQKQVLAHSAVGAFWSHCGWNSTLESMGEGVPMICRPFTTDQKVNARYVECVWRVGVQVEGELKRGVVERAVKRLLVDEEGEEMKLRALSLKEKLKVSVLPGGSSHSSLDDLIKTL.

UDP-alpha-D-glucose contacts are provided by residues Ser-279, 337–339, 354–362, and 376–379; these read APQ, HCGWNSTLE, and TTDQ.

It belongs to the UDP-glycosyltransferase family.

This chain is UDP-glycosyltransferase 76E9 (UGT76E9), found in Arabidopsis thaliana (Mouse-ear cress).